A 309-amino-acid chain; its full sequence is Probable cell division protein WhiA (309 aa).

A DNA-binding region (H-T-H motif) is located at residues 275–309 (SLKELGELVPGGPISKSGINHRLRKINQYAEKLRA).

This sequence belongs to the WhiA family.

In terms of biological role, involved in cell division and chromosome segregation. In Pediococcus pentosaceus (strain ATCC 25745 / CCUG 21536 / LMG 10740 / 183-1w), this protein is Probable cell division protein WhiA.